We begin with the raw amino-acid sequence, 73 residues long: MSAEPANGPTEDQVEILEYNFNKVNRHPDPTTLCLIAAEAGLSEEETQKWFKQRLAQWRRSEGLPSECRSVTD.

Positions 3–62 form a DNA-binding region, homeobox; degenerate; it reads AEPANGPTEDQVEILEYNFNKVNRHPDPTTLCLIAAEAGLSEEETQKWFKQRLAQWRRSE.

As to quaternary structure, interacts with serum response factor (SRF). Component of a large complex containing histone deacetylases such as HDAC2. Interacts with the acetylated forms of HSPA1A and HSPA1B. Interacts with HSPA8.

The protein localises to the nucleus. It localises to the cytoplasm. Its function is as follows. Atypical homeodomain protein which does not bind DNA and is required to modulate cardiac growth and development. Acts via its interaction with SRF, thereby modulating the expression of SRF-dependent cardiac-specific genes and cardiac development. Prevents SRF-dependent transcription either by inhibiting SRF binding to DNA or by recruiting histone deacetylase (HDAC) proteins that prevent transcription by SRF. Overexpression causes cardiac hypertrophy. Acts as a co-chaperone for HSPA1A and HSPA1B chaperone proteins and assists in chaperone-mediated protein refolding. The chain is Homeodomain-only protein (HOPX) from Sus scrofa (Pig).